Consider the following 554-residue polypeptide: Phosphomethylpyrimidine synthase (554 aa).

Substrate is bound by residues Asn188, Met217, Tyr246, His282, 302–304 (SRG), 343–346 (DGLR), and Glu382. His386 is a binding site for Zn(2+). Tyr409 is a substrate binding site. A Zn(2+)-binding site is contributed by His450. Positions 530, 533, and 538 each coordinate [4Fe-4S] cluster.

This sequence belongs to the ThiC family. Homodimer. [4Fe-4S] cluster is required as a cofactor.

It carries out the reaction 5-amino-1-(5-phospho-beta-D-ribosyl)imidazole + S-adenosyl-L-methionine = 4-amino-2-methyl-5-(phosphooxymethyl)pyrimidine + CO + 5'-deoxyadenosine + formate + L-methionine + 3 H(+). Its pathway is cofactor biosynthesis; thiamine diphosphate biosynthesis. Functionally, catalyzes the synthesis of the hydroxymethylpyrimidine phosphate (HMP-P) moiety of thiamine from aminoimidazole ribotide (AIR) in a radical S-adenosyl-L-methionine (SAM)-dependent reaction. The chain is Phosphomethylpyrimidine synthase from Coxiella burnetii (strain RSA 493 / Nine Mile phase I).